A 470-amino-acid chain; its full sequence is Argininosuccinate lyase (470 aa).

The protein belongs to the lyase 1 family. Argininosuccinate lyase subfamily.

Its subcellular location is the cytoplasm. The catalysed reaction is 2-(N(omega)-L-arginino)succinate = fumarate + L-arginine. Its pathway is amino-acid biosynthesis; L-arginine biosynthesis; L-arginine from L-ornithine and carbamoyl phosphate: step 3/3. The sequence is that of Argininosuccinate lyase from Bordetella avium (strain 197N).